A 485-amino-acid polypeptide reads, in one-letter code: Probable protein phosphatase 2C 3 (485 aa).

Residues 1–11 show a composition bias toward low complexity; that stretch reads MSSPSPSSEAA. 2 disordered regions span residues 1–29 and 43–72; these read MSSPSPSSEAAAAHHHHHQRRQHAGAAGG and ARAERPMGSGSRICARDEEDGGGGGGAEGG. Residues 13 to 23 show a composition bias toward basic residues; that stretch reads AHHHHHQRRQH. The 247-residue stretch at 107–353 folds into the PPM-type phosphatase domain; sequence SSSSSSSLAS…DDTTCIVVDM (247 aa). Residues Asp-129, Gly-130, Asp-305, and Asp-344 each coordinate Mn(2+).

It belongs to the PP2C family. Requires Mg(2+) as cofactor. Mn(2+) serves as cofactor.

The catalysed reaction is O-phospho-L-seryl-[protein] + H2O = L-seryl-[protein] + phosphate. The enzyme catalyses O-phospho-L-threonyl-[protein] + H2O = L-threonyl-[protein] + phosphate. The chain is Probable protein phosphatase 2C 3 from Oryza sativa subsp. japonica (Rice).